Consider the following 488-residue polypeptide: WD repeat-containing protein slp1 (488 aa).

Disordered regions lie at residues 1–29 and 74–93; these read MEIAGNSSTISPTFSTPTKKRNLVFPNSP and CGSPRNKSRPASRSDRFIPS. Low complexity predominate over residues 7–17; the sequence is SSTISPTFSTP. WD repeat units follow at residues 178 to 215, 219 to 258, 261 to 298, 302 to 341, 344 to 386, 388 to 429, and 434 to 473; these read IDDYYLNLLDWSNLNVVAVALERNVYVWNADSGSVSAL, DESTYVASVKWSHDGSFLSVGLGNGLVDIYDVESQTKLRT, GHQARVGCLSWNRHVLSSGSRSGAIHHHDVRIANHQIG, GHSSEVCGLAWRSDGLQLASGGNDNVVQIWDARSSIPKFT, NHNA…RVNT, DAGS…LTKQ, and AHDTRVLYSALSPDGRILSTAASDENLKFWRVYDGDHVKR.

Belongs to the WD repeat CDC20/Fizzy family. Interacts with cdc13, mad3 and mes1.

In terms of biological role, required for mad2-dependent spindle checkpoint activation. Promotes ubiquitin-dependent degradation of cdc13 by the anaphase promoting complex/cyclosome (APC/C). This Schizosaccharomyces pombe (strain 972 / ATCC 24843) (Fission yeast) protein is WD repeat-containing protein slp1 (slp1).